A 210-amino-acid chain; its full sequence is DNA-directed RNA polymerases I, II, and III subunit RPABC1 (210 aa).

Met1 carries the N-acetylmethionine modification. A Glycyl lysine isopeptide (Lys-Gly) (interchain with G-Cter in SUMO2) cross-link involves residue Lys81.

This sequence belongs to the archaeal Rpo5/eukaryotic RPB5 RNA polymerase subunit family. Component of the RNA polymerase I (Pol I), RNA polymerase II (Pol II) and RNA polymerase III (Pol III) complexes consisting of at least 13, 12 and 17 subunits, respectively. Pol I complex consists of a ten-subunit catalytic core composed of POLR1A/RPA1, POLR1B/RPA2, POLR1C/RPAC1, POLR1D/RPAC2, POLR1H/RPA12, POLR2E/RPABC1, POLR2F/RPABC2, POLR2H/RPABC3, POLR2K/RPABC4 and POLR2L/RPABC5; a mobile stalk subunit POLR1F/RPA43 protruding from the core and additional subunits homologous to general transcription factors POLR1E/RPA49 and POLR1G/RPA34. Part of Pol I pre-initiation complex (PIC), in which Pol I core assembles with RRN3 and promoter-bound UTBF and SL1/TIF-IB complex. Pol II complex contains a ten-subunit catalytic core composed of POLR2A/RPB1, POLR2B/RPB2, POLR2C/RPB3, POLR2I/RPB9, POLR2J/RPB11, POLR2E/RPABC1, POLR2F/RPABC2, POLR2H/RPABC3, POLR2K/RPABC4 and POLR2L/RPABC5 and a mobile stalk composed of two subunits POLR2D/RPB4 and POLR2G/RPB7. Part of Pol II(G) complex, in which Pol II core associates with an additional subunit POLR2M; unlike conventional Pol II, Pol II(G) functions as a transcriptional repressor. Part of TBP-based Pol II pre-initiation complex (PIC), in which Pol II core assembles with general transcription factors and other specific initiation factors including GTF2E1, GTF2E2, GTF2F1, GTF2F2, TCEA1, ERCC2, ERCC3, GTF2H2, GTF2H3, GTF2H4, GTF2H5, GTF2A1, GTF2A2, GTF2B and TBP; this large multi-subunit PIC complex mediates DNA unwinding and targets Pol II core to the transcription start site where the first phosphodiester bond forms. In Pol II complex, this subunit is present in 2-fold molar excess over the other subunits. Pol III complex consists of a ten-subunit catalytic core composed of POLR3A/RPC1, POLR3B/RPC2, POLR1C/RPAC1, POLR1D/RPAC2, POLR3K/RPC10, POLR2E/RPABC1, POLR2F/RPABC2, POLR2H/RPABC3, POLR2K/RPABC4 and POLR2L/RPABC5; a mobile stalk composed of two subunits POLR3H/RPC8 and CRCP/RPC9, protruding from the core and functioning primarily in transcription initiation; and additional subunits homologous to general transcription factors of the RNA polymerase II machinery, POLR3C/RPC3-POLR3F/RPC6-POLR3G/RPC7 heterotrimer required for transcription initiation and POLR3D/RPC4-POLR3E/RPC5 heterodimer involved in both transcription initiation and termination. Component of the PAQosome complex which is responsible for the biogenesis of several protein complexes and which consists of R2TP complex members RUVBL1, RUVBL2, RPAP3 and PIH1D1, URI complex members PFDN2, PFDN6, PDRG1, UXT and URI1 as well as ASDURF, POLR2E and DNAAF10/WDR92. Interacts with URI1. As to quaternary structure, (Microbial infection) Interacts with HBV protein X.

It is found in the nucleus. The protein localises to the nucleolus. DNA-dependent RNA polymerase catalyzes the transcription of DNA into RNA using the four ribonucleoside triphosphates as substrates. Common component of RNA polymerases I, II and III which synthesize ribosomal RNA precursors, mRNA precursors and many functional non-coding RNAs, and small RNAs, such as 5S rRNA and tRNAs, respectively. Pol II is the central component of the basal RNA polymerase II transcription machinery. Pols are composed of mobile elements that move relative to each other. In Pol II, POLR2E/RPABC1 is part of the lower jaw surrounding the central large cleft and thought to grab the incoming DNA template. The protein is DNA-directed RNA polymerases I, II, and III subunit RPABC1 of Homo sapiens (Human).